The primary structure comprises 124 residues: MTKIKQEIYNKRPTSPHLTIYKPQISSTLSILHRMTGVALFFVVSILVWWLILSKYDNNYLQLARCCIIKICLVAFSYAWCYHLCNGIRHLFWDIGYGFSIRAVNITGWCVVVCSILLTMLLWV.

The Cytoplasmic segment spans residues Met-1–Leu-29. The chain crosses the membrane as a helical span at residues Ser-30 to Lys-55. Topologically, residues Tyr-56–Cys-67 are periplasmic. The chain crosses the membrane as a helical span at residues Ile-68–Ile-88. His-83 contacts heme. The Cytoplasmic segment spans residues Arg-89–Ala-103. The helical transmembrane segment at Val-104–Val-124 threads the bilayer.

It belongs to the cytochrome b560 family. Part of an enzyme complex containing four subunits: a flavoprotein, an iron-sulfur protein, plus two membrane-anchoring proteins, SdhC and SdhD. The complex can form homotrimers. The cofactor is heme.

It localises to the cell inner membrane. It participates in carbohydrate metabolism; tricarboxylic acid cycle. Membrane-anchoring subunit of succinate dehydrogenase (SDH). This is Succinate dehydrogenase cytochrome b556 subunit (sdhC) from Rickettsia typhi (strain ATCC VR-144 / Wilmington).